A 489-amino-acid chain; its full sequence is Pre-glycoprotein polyprotein GP complex (489 aa).

The N-myristoyl glycine; by host moiety is linked to residue G2. Residues 2–17 (GQIVTFFQEVPHILEE) lie on the Extracellular side of the membrane. The chain crosses the membrane as a helical span at residues 18–33 (VMNIVLMTLSILAILK). Over 34 to 58 (GIYNVMTCGIIGLITFLFLCGRSCS) the chain is Cytoplasmic. C57 provides a ligand contact to Zn(2+). The Extracellular segment spans residues 59-430 (SIYKDNYEFF…QSTTPLGLVD (372 aa)). N-linked (GlcNAc...) asparagine; by host glycans are attached at residues N78, N88, N98, N108, N118, and N166. Cystine bridges form between C85–C229, C117–C154, C179–C210, C277–C290, C299–C308, and C362–C383. An N-linked (GlcNAc...) asparagine; by host glycan is attached at N222. N363, N371, N388, and N393 each carry an N-linked (GlcNAc...) asparagine; by host glycan. Residues 431–451 (LFVFSTSFYLISVFLHLIKIP) traverse the membrane as a helical segment. Residues 452–489 (THRHIKGKPCPKPHRLNHMAICSCGFYKQPGLPTQWKR) lie on the Cytoplasmic side of the membrane. Zn(2+) is bound by residues H453, H455, C461, H465, C473, and C475.

It belongs to the arenaviridae GPC protein family. Interacts with glycoprotein G2. Part of the GP complex (GP-C) together with glycoprotein G1 and glycoprotein G2. The GP-complex interacts with protein Z, which interacts with ribonucleocapsid; these interactions may induce virion budding. As to quaternary structure, homotrimer; disulfide-linked. In pre-fusion state, G1 homotrimers bind G2 homotrimers via ionic interactions. Part of the GP complex (GP-C) together with glycoprotein G2 and the stable signal peptide. The GP-complex interacts with protein Z, which interacts with ribonucleocapsid; these interactions may induce virion budding. In terms of assembly, homotrimer. Interacts with the stable signal peptide. In pre-fusion state, G2 homotrimers bind G1 homotrimers via ionic interactions. Part of the GP complex (GP-C) together with glycoprotein G1 and the stable signal peptide. Acidification in the endosome triggers rearrangements, which ultimately leads to a 6 helix bundle formed by the two heptad repeat domains (HR1 and HR2) in post-fusion state. The GP-complex interacts with protein Z, which interacts with ribonucleocapsid; these interactions may induce virion budding. Specific enzymatic cleavages in vivo yield mature proteins. GP-C polyprotein is cleaved in the endoplasmic reticulum by the host protease MBTPS1. Only cleaved glycoprotein is incorporated into virions. Post-translationally, the SSP remains stably associated with the GP complex following cleavage by signal peptidase and plays crucial roles in the trafficking of GP through the secretory pathway. In terms of processing, myristoylation is necessary for GP2-mediated fusion activity.

The protein resides in the virion membrane. Its subcellular location is the host endoplasmic reticulum membrane. It localises to the host Golgi apparatus membrane. The protein localises to the host cell membrane. Its function is as follows. Functions as a cleaved signal peptide that is retained as the third component of the GP complex (GP-C). Helps to stabilize the spike complex in its native conformation. The SSP is required for efficient glycoprotein expression, post-translational maturation cleavage of G1 and G2, glycoprotein transport to the cell surface plasma membrane, formation of infectious virus particles, and acid pH-dependent glycoprotein-mediated cell fusion. In terms of biological role, forms the virion spikes together with glycoprotein G2. The glycoprotein spike trimers are connected to the underlying matrix. Interacts with the host receptor leading to virus endocytosis. Functionally, forms the virion spikes together with glycoprotein G1. The glycoprotein spike trimers are connected to the underlying matrix. Class I viral fusion protein that directs fusion of viral and host endosomal membranes, leading to delivery of the nucleocapsid into the cytoplasm. Membrane fusion is mediated by irreversible conformational changes induced by acidification. In Mastomys natalensis (African soft-furred rat), this protein is Pre-glycoprotein polyprotein GP complex.